The sequence spans 304 residues: UDP-3-O-acyl-N-acetylglucosamine deacetylase (304 aa).

3 residues coordinate Zn(2+): His78, His237, and Asp241. The active-site Proton donor is His264.

This sequence belongs to the LpxC family. The cofactor is Zn(2+).

It carries out the reaction a UDP-3-O-[(3R)-3-hydroxyacyl]-N-acetyl-alpha-D-glucosamine + H2O = a UDP-3-O-[(3R)-3-hydroxyacyl]-alpha-D-glucosamine + acetate. Its pathway is glycolipid biosynthesis; lipid IV(A) biosynthesis; lipid IV(A) from (3R)-3-hydroxytetradecanoyl-[acyl-carrier-protein] and UDP-N-acetyl-alpha-D-glucosamine: step 2/6. In terms of biological role, catalyzes the hydrolysis of UDP-3-O-myristoyl-N-acetylglucosamine to form UDP-3-O-myristoylglucosamine and acetate, the committed step in lipid A biosynthesis. In Marinobacter nauticus (strain ATCC 700491 / DSM 11845 / VT8) (Marinobacter aquaeolei), this protein is UDP-3-O-acyl-N-acetylglucosamine deacetylase.